The sequence spans 297 residues: Phosphatidylserine decarboxylase proenzyme (297 aa).

Catalysis depends on charge relay system; for autoendoproteolytic cleavage activity residues D112, H168, and S255. The active-site Schiff-base intermediate with substrate; via pyruvic acid; for decarboxylase activity is S255. Position 255 is a pyruvic acid (Ser); by autocatalysis (S255).

This sequence belongs to the phosphatidylserine decarboxylase family. PSD-B subfamily. Prokaryotic type II sub-subfamily. Heterodimer of a large membrane-associated beta subunit and a small pyruvoyl-containing alpha subunit. Pyruvate is required as a cofactor. In terms of processing, is synthesized initially as an inactive proenzyme. Formation of the active enzyme involves a self-maturation process in which the active site pyruvoyl group is generated from an internal serine residue via an autocatalytic post-translational modification. Two non-identical subunits are generated from the proenzyme in this reaction, and the pyruvate is formed at the N-terminus of the alpha chain, which is derived from the carboxyl end of the proenzyme. The autoendoproteolytic cleavage occurs by a canonical serine protease mechanism, in which the side chain hydroxyl group of the serine supplies its oxygen atom to form the C-terminus of the beta chain, while the remainder of the serine residue undergoes an oxidative deamination to produce ammonia and the pyruvoyl prosthetic group on the alpha chain. During this reaction, the Ser that is part of the protease active site of the proenzyme becomes the pyruvoyl prosthetic group, which constitutes an essential element of the active site of the mature decarboxylase.

The protein resides in the cell membrane. The catalysed reaction is a 1,2-diacyl-sn-glycero-3-phospho-L-serine + H(+) = a 1,2-diacyl-sn-glycero-3-phosphoethanolamine + CO2. It participates in phospholipid metabolism; phosphatidylethanolamine biosynthesis; phosphatidylethanolamine from CDP-diacylglycerol: step 2/2. In terms of biological role, catalyzes the formation of phosphatidylethanolamine (PtdEtn) from phosphatidylserine (PtdSer). This is Phosphatidylserine decarboxylase proenzyme from Clostridium tetani (strain Massachusetts / E88).